The chain runs to 291 residues: BTB/POZ domain-containing protein 19 (291 aa).

The BTB domain maps to 29 to 98; sequence SDVRFVVGQE…LYTNSAKLQR (70 aa). The BACK domain occupies 134-234; sequence CEALQVAVTF…LALLAPAELS (101 aa).

This is BTB/POZ domain-containing protein 19 (BTBD19) from Bos taurus (Bovine).